The primary structure comprises 661 residues: Acyl-coenzyme A oxidase acox-1.2 (661 aa).

FAD-binding positions include 147–150 (YAQT), 155–156 (GS), and Gly-189. Substrate contacts are provided by residues 283 to 286 (KIGY) and Arg-293. FAD is bound by residues Arg-318 and 338-341 (QQHR). Residues His-340, Ser-390, His-394, and Gln-402 each contribute to the ATP site. Gly-409 provides a ligand contact to FAD. 431-432 (YE) contacts substrate. Catalysis depends on Glu-432, which acts as the Proton acceptor. Glu-434 lines the FAD pocket. Residues 525 to 528 (RASR) and Tyr-573 each bind ATP. Residues 659 to 661 (AKL) carry the Microbody targeting signal motif.

The protein belongs to the acyl-CoA oxidase family. As to quaternary structure, homodimer. Forms a heterodimer with acox-1.1. Requires FAD as cofactor.

The protein resides in the peroxisome. It catalyses the reaction asc-omegaC5-CoA + O2 = asc-omegaDeltaC5-CoA + H2O2. It functions in the pathway lipid metabolism; peroxisomal fatty acid beta-oxidation. Activated by ATP. ATP binding leads to a conformational change that promotes FAD cofactor binding and enzyme activity. ATP binding likely occurs during acox-1.2 folding and/or dimer formation. The preference for processing substrates with shorter fatty acid chains is likely due to the closed conformation of the active site. Its function is as follows. Involved in the first step of peroxisomal beta-oxidation by catalyzing the desaturation of fatty acid-derived side chains of ascaroside pheromones, which regulates development and behavior. Specifically, shortens ascarosides with 5-carbon omega side chain (asc-omega-C5). Does not shorten indol-3-carbonyl(IC)-ascaroside with 7-carbon or 9-carbon side chains. Does not catalyze the desaturation of fatty acids or hydroxylated fatty acids. The protein is Acyl-coenzyme A oxidase acox-1.2 of Caenorhabditis elegans.